Consider the following 314-residue polypeptide: 4-hydroxy-3-methylbut-2-enyl diphosphate reductase (314 aa).

Residue Cys12 participates in [4Fe-4S] cluster binding. Positions 41 and 74 each coordinate (2E)-4-hydroxy-3-methylbut-2-enyl diphosphate. The dimethylallyl diphosphate site is built by His41 and His74. Positions 41 and 74 each coordinate isopentenyl diphosphate. A [4Fe-4S] cluster-binding site is contributed by Cys96. (2E)-4-hydroxy-3-methylbut-2-enyl diphosphate is bound at residue His124. His124 contributes to the dimethylallyl diphosphate binding site. His124 lines the isopentenyl diphosphate pocket. Catalysis depends on Glu126, which acts as the Proton donor. Residue Thr167 participates in (2E)-4-hydroxy-3-methylbut-2-enyl diphosphate binding. Cys197 is a [4Fe-4S] cluster binding site. 4 residues coordinate (2E)-4-hydroxy-3-methylbut-2-enyl diphosphate: Ser225, Ser226, Asn227, and Ser269. Positions 225, 226, 227, and 269 each coordinate dimethylallyl diphosphate. The isopentenyl diphosphate site is built by Ser225, Ser226, Asn227, and Ser269.

It belongs to the IspH family. Requires [4Fe-4S] cluster as cofactor.

The enzyme catalyses isopentenyl diphosphate + 2 oxidized [2Fe-2S]-[ferredoxin] + H2O = (2E)-4-hydroxy-3-methylbut-2-enyl diphosphate + 2 reduced [2Fe-2S]-[ferredoxin] + 2 H(+). It carries out the reaction dimethylallyl diphosphate + 2 oxidized [2Fe-2S]-[ferredoxin] + H2O = (2E)-4-hydroxy-3-methylbut-2-enyl diphosphate + 2 reduced [2Fe-2S]-[ferredoxin] + 2 H(+). Its pathway is isoprenoid biosynthesis; dimethylallyl diphosphate biosynthesis; dimethylallyl diphosphate from (2E)-4-hydroxy-3-methylbutenyl diphosphate: step 1/1. It participates in isoprenoid biosynthesis; isopentenyl diphosphate biosynthesis via DXP pathway; isopentenyl diphosphate from 1-deoxy-D-xylulose 5-phosphate: step 6/6. In terms of biological role, catalyzes the conversion of 1-hydroxy-2-methyl-2-(E)-butenyl 4-diphosphate (HMBPP) into a mixture of isopentenyl diphosphate (IPP) and dimethylallyl diphosphate (DMAPP). Acts in the terminal step of the DOXP/MEP pathway for isoprenoid precursor biosynthesis. This chain is 4-hydroxy-3-methylbut-2-enyl diphosphate reductase, found in Aliivibrio salmonicida (strain LFI1238) (Vibrio salmonicida (strain LFI1238)).